A 702-amino-acid chain; its full sequence is Acetylcholinesterase (702 aa).

The signal sequence occupies residues 1–36 (MEIRGLITRLLGPCHLRHLILCSLGLYSILVQSVHC). The disordered stretch occupies residues 107-134 (HIHSTTTRRRGLTRRESSSDATDSDPLV). N187 carries N-linked (GlcNAc...) asparagine glycosylation. Residues C195 and C222 are joined by a disulfide bond. Catalysis depends on S327, which acts as the Acyl-ester intermediate. C381 and C394 are joined by a disulfide. Catalysis depends on charge relay system residues E453 and H567. C529 and C650 form a disulfide bridge. N637 carries an N-linked (GlcNAc...) asparagine glycan.

Belongs to the type-B carboxylesterase/lipase family.

Its subcellular location is the synapse. It localises to the secreted. It is found in the cell membrane. The enzyme catalyses acetylcholine + H2O = choline + acetate + H(+). Functionally, rapidly hydrolyzes choline released into the synapse. The sequence is that of Acetylcholinesterase (ACHE1) from Culex pipiens (House mosquito).